We begin with the raw amino-acid sequence, 801 residues long: Protein 4.1 (801 aa).

The disordered stretch occupies residues M1 to V187. Low complexity predominate over residues E45–T58. Residues S88–D107 show a composition bias toward basic and acidic residues. The span at E108–D117 shows a compositional bias: acidic residues. Polar residues predominate over residues S141–Q151. The segment covering Q154 to D166 has biased composition (acidic residues). Residues V167–A182 show a composition bias toward basic and acidic residues. The FERM domain occupies M193 to S474. Residues S477–K587 form a hydrophilic region. The segment at R516–Q613 is disordered. Residues R563–E577 show a composition bias toward basic and acidic residues. Residues D588–P651 are spectrin--actin-binding. Polar residues predominate over residues A591–V601. Positions D604–Q613 are enriched in basic and acidic residues. The tract at residues R653–A801 is C-terminal (CTD).

In terms of assembly, binds with a high affinity to glycophorin and with lower affinity to band III protein. Associates with the nuclear mitotic apparatus. Binds calmodulin. Post-translationally, phosphorylated at multiple sites by different protein kinases and each phosphorylation event selectively modulates the protein's functions. Found exclusively in photoreceptors following the terminal mitosis of retinal neurons. When retinal synaptogenesis is complete, protein 4.1 is also expressed in the inner retina. In adult amphibian retinas, protein 4.1 is detected in photoreceptors, bipolar cells, and ganglion cell axons.

The protein localises to the nucleus. The protein resides in the cytoplasm. It is found in the cytoskeleton. Its subcellular location is the cell cortex. Functionally, protein 4.1 is a major structural element of the erythrocyte membrane skeleton. It plays a key role in regulating membrane physical properties of mechanical stability and deformability by stabilizing spectrin-actin interaction. May be required for dynein-dynactin complex and NUMA1 recruitment at the mitotic cell cortex during anaphase. The sequence is that of Protein 4.1 from Xenopus laevis (African clawed frog).